The chain runs to 474 residues: Gamma-aminobutyric acid receptor subunit beta-1 (474 aa).

Positions 1–25 are cleaved as a signal peptide; it reads MWTVQNRESLGLLSFPVMITMVCCA. Residues 26–245 lie on the Extracellular side of the membrane; it reads HSTNEPSNMS…SFRLKRNIGY (220 aa). An N-linked (GlcNAc...) asparagine glycan is attached at Asn-105. Tyr-122 contacts histamine. Residues Cys-161 and Cys-175 are joined by a disulfide bond. N-linked (GlcNAc...) asparagine glycosylation is present at Asn-174. Histamine-binding positions include 181–182 and Thr-227; that span reads SY. Positions 182 and 227 each coordinate 4-aminobutanoate. The next 3 helical transmembrane spans lie at 246 to 267, 271 to 293, and 305 to 327; these read FILQ…SFWI, ASAA…STHL, and AIDI…YAFV. Residues 328-451 are Cytoplasmic-facing; the sequence is NYIFFGKGPQ…DLTDVNSIDK (124 aa). Residues 452–473 traverse the membrane as a helical segment; sequence WSRMFFPITFSLFNVVYWLYYV.

The protein belongs to the ligand-gated ion channel (TC 1.A.9) family. Gamma-aminobutyric acid receptor (TC 1.A.9.5) subfamily. GABRB1 sub-subfamily. In terms of assembly, heteropentamer, formed by a combination of alpha (GABRA1-6), beta (GABRB1-3), gamma (GABRG1-3), delta (GABRD), epsilon (GABRE), rho (GABRR1-3), pi (GABRP) and theta (GABRQ) chains, each subunit exhibiting distinct physiological and pharmacological properties. Binds UBQLN1.

The protein resides in the postsynaptic cell membrane. The protein localises to the cell membrane. It carries out the reaction chloride(in) = chloride(out). With respect to regulation, potentiated by etomidate, propofol, pregnanolone and flurazepam. Potentiated by histamine. Beta subunit of the heteropentameric ligand-gated chloride channel gated by gamma-aminobutyric acid (GABA), a major inhibitory neurotransmitter in the brain. GABA-gated chloride channels, also named GABA(A) receptors (GABAAR), consist of five subunits arranged around a central pore and contain one or two GABA active binding sites located at the alpha and beta subunit interfaces, depending on subunit composition. When activated by GABA, GABAARs selectively allow the flow of chloride anions across the cell membrane down their electrochemical gradient. Chloride influx into the postsynaptic neuron following GABAAR opening decreases the neuron ability to generate a new action potential, thereby reducing nerve transmission. Beta-containing GABAARs can simultaneously bind GABA and histamine where histamine binds at the interface of two neighboring beta subunits, which may be involved in the regulation of sleep and wakefulness. This Homo sapiens (Human) protein is Gamma-aminobutyric acid receptor subunit beta-1.